Consider the following 273-residue polypeptide: 4-hydroxy-tetrahydrodipicolinate reductase (273 aa).

NAD(+) is bound by residues 12 to 17 and E38; that span reads GAGGRM. R39 contributes to the NADP(+) binding site. Residues 102–104 and 126–129 each bind NAD(+); these read GTT and AANF. The Proton donor/acceptor role is filled by H159. Position 160 (H160) interacts with (S)-2,3,4,5-tetrahydrodipicolinate. K163 acts as the Proton donor in catalysis. Residue 169-170 coordinates (S)-2,3,4,5-tetrahydrodipicolinate; the sequence is GT.

It belongs to the DapB family. In terms of assembly, homotetramer.

The protein localises to the cytoplasm. It catalyses the reaction (S)-2,3,4,5-tetrahydrodipicolinate + NAD(+) + H2O = (2S,4S)-4-hydroxy-2,3,4,5-tetrahydrodipicolinate + NADH + H(+). The enzyme catalyses (S)-2,3,4,5-tetrahydrodipicolinate + NADP(+) + H2O = (2S,4S)-4-hydroxy-2,3,4,5-tetrahydrodipicolinate + NADPH + H(+). It participates in amino-acid biosynthesis; L-lysine biosynthesis via DAP pathway; (S)-tetrahydrodipicolinate from L-aspartate: step 4/4. Catalyzes the conversion of 4-hydroxy-tetrahydrodipicolinate (HTPA) to tetrahydrodipicolinate. In Salmonella agona (strain SL483), this protein is 4-hydroxy-tetrahydrodipicolinate reductase.